Reading from the N-terminus, the 294-residue chain is Phosphatidylglycerol--prolipoprotein diacylglyceryl transferase (294 aa).

Transmembrane regions (helical) follow at residues valine 19–leucine 39, leucine 69–tyrosine 89, isoleucine 101–alanine 121, isoleucine 139–alanine 159, glutamine 195–tryptophan 215, glycine 224–phenylalanine 244, and tryptophan 267–isoleucine 287. Arginine 152 provides a ligand contact to a 1,2-diacyl-sn-glycero-3-phospho-(1'-sn-glycerol).

The protein belongs to the Lgt family.

Its subcellular location is the cell inner membrane. It catalyses the reaction L-cysteinyl-[prolipoprotein] + a 1,2-diacyl-sn-glycero-3-phospho-(1'-sn-glycerol) = an S-1,2-diacyl-sn-glyceryl-L-cysteinyl-[prolipoprotein] + sn-glycerol 1-phosphate + H(+). It participates in protein modification; lipoprotein biosynthesis (diacylglyceryl transfer). Catalyzes the transfer of the diacylglyceryl group from phosphatidylglycerol to the sulfhydryl group of the N-terminal cysteine of a prolipoprotein, the first step in the formation of mature lipoproteins. In Roseobacter denitrificans (strain ATCC 33942 / OCh 114) (Erythrobacter sp. (strain OCh 114)), this protein is Phosphatidylglycerol--prolipoprotein diacylglyceryl transferase.